We begin with the raw amino-acid sequence, 334 residues long: Mucin-15 (334 aa).

Positions 1–23 are cleaved as a signal peptide; it reads MLALAKILLISTLFYSLLSGSHG. Topologically, residues 24–236 are extracellular; the sequence is KENQDINTTQ…SDPQKENRNT (213 aa). N-linked (GlcNAc...) asparagine glycans are attached at residues Asn-30, Asn-61, Asn-79, Asn-90, Asn-148, Asn-155, Asn-163, Asn-218, and Asn-225. Positions 64-104 are disordered; sequence TSNLKASHSPPLNLPNNSHGITDFSSNSSAEHSLGSLKPTS. A compositionally biased stretch (polar residues) spans 77–94; the sequence is LPNNSHGITDFSSNSSAE. The helical transmembrane segment at 237-257 threads the bilayer; it reads GIVFGAILGAILGVSLLTLVG. The Cytoplasmic segment spans residues 258-334; the sequence is YLLCGKRKTD…DDIPPLRTSV (77 aa). A disordered region spans residues 304–334; that stretch reads PTLNDSAMPESEENARDGIPMDDIPPLRTSV.

Post-translationally, highly glycosylated (N- and O-linked carbohydrates). Expressed in spleen, thymus, prostate, testis, ovary, small intestine, colon, peripheral blood leukocyte, bone marrow, lymph node and lung.

The protein localises to the cell membrane. It localises to the secreted. Functionally, may play a role in the cell adhesion to the extracellular matrix. The protein is Mucin-15 (MUC15) of Homo sapiens (Human).